A 258-amino-acid polypeptide reads, in one-letter code: Aspartate/glutamate leucyltransferase (258 aa).

Belongs to the R-transferase family. Bpt subfamily.

It is found in the cytoplasm. It carries out the reaction N-terminal L-glutamyl-[protein] + L-leucyl-tRNA(Leu) = N-terminal L-leucyl-L-glutamyl-[protein] + tRNA(Leu) + H(+). The enzyme catalyses N-terminal L-aspartyl-[protein] + L-leucyl-tRNA(Leu) = N-terminal L-leucyl-L-aspartyl-[protein] + tRNA(Leu) + H(+). Functions in the N-end rule pathway of protein degradation where it conjugates Leu from its aminoacyl-tRNA to the N-termini of proteins containing an N-terminal aspartate or glutamate. The polypeptide is Aspartate/glutamate leucyltransferase (Rhizobium etli (strain ATCC 51251 / DSM 11541 / JCM 21823 / NBRC 15573 / CFN 42)).